A 101-amino-acid chain; its full sequence is NAD(P)H-quinone oxidoreductase subunit 4L, chloroplastic (101 aa).

3 helical membrane passes run 2-22 (MLEH…FGLI), 32-52 (MCLE…SHLF), and 61-81 (IFSI…LAIV).

It belongs to the complex I subunit 4L family. In terms of assembly, NDH is composed of at least 16 different subunits, 5 of which are encoded in the nucleus.

Its subcellular location is the plastid. It localises to the chloroplast thylakoid membrane. The enzyme catalyses a plastoquinone + NADH + (n+1) H(+)(in) = a plastoquinol + NAD(+) + n H(+)(out). It carries out the reaction a plastoquinone + NADPH + (n+1) H(+)(in) = a plastoquinol + NADP(+) + n H(+)(out). In terms of biological role, NDH shuttles electrons from NAD(P)H:plastoquinone, via FMN and iron-sulfur (Fe-S) centers, to quinones in the photosynthetic chain and possibly in a chloroplast respiratory chain. The immediate electron acceptor for the enzyme in this species is believed to be plastoquinone. Couples the redox reaction to proton translocation, and thus conserves the redox energy in a proton gradient. The protein is NAD(P)H-quinone oxidoreductase subunit 4L, chloroplastic of Piper cenocladum (Ant piper).